We begin with the raw amino-acid sequence, 479 residues long: Adenylate kinase 8 (479 aa).

2 adenylate kinase regions span residues 58–258 (PKVV…TYVQ) and 269–471 (PKVL…SGII). ATP is bound at residue 67–72 (ASGKTT). Residues 87-113 (TKESLLEREFSRLSVEAKSYYQVYKKI) form an NMP 1 region. AMP is bound by residues 140-143 (GIPE), Q147, and R203. An LID 1 region spans residues 177–206 (GKRIDPVTGEIYHTTFDWPPEPEIQNRLRQ). ATP is bound at residue 278-283 (GSGKRL). Residues 298-327 (SCGQLLKEAVAAKSSFGELIQPFFEKRMTV) form an NMP 2 region. AMP-binding positions include 325-327 (MTV), 354-357 (GFPR), and Q361. Positions 391–424 (LRRTDPVTGERFHLMYKPPPTIEVQVRLLQNPKD) are LID 2. R392 contacts ATP.

It belongs to the adenylate kinase family. In terms of assembly, interacts with CFAP45 and CFAP52; CFAP45 and AK8 dimerization may create a cavity at the interface of the dimer that can accommodate AMP.

Its subcellular location is the cytoplasm. It localises to the cytosol. The protein resides in the cytoskeleton. It is found in the cilium axoneme. It catalyses the reaction AMP + ATP = 2 ADP. It carries out the reaction a 2'-deoxyribonucleoside 5'-diphosphate + ATP = a 2'-deoxyribonucleoside 5'-triphosphate + ADP. The enzyme catalyses a ribonucleoside 5'-diphosphate + ATP = a ribonucleoside 5'-triphosphate + ADP. Functionally, nucleoside monophosphate (NMP) kinase that catalyzes the reversible transfer of the terminal phosphate group between nucleoside triphosphates and monophosphates. Has highest activity toward AMP, and weaker activity toward dAMP, CMP and dCMP. Also displays broad nucleoside diphosphate kinase activity. This Mus musculus (Mouse) protein is Adenylate kinase 8 (Ak8).